Reading from the N-terminus, the 217-residue chain is Cytochrome c biogenesis ATP-binding export protein CcmA (217 aa).

An ABC transporter domain is found at 16-214 (LVLEQLSCER…AHGQAEVTEG (199 aa)). ATP is bound at residue 48–55 (GANGAGKT).

The protein belongs to the ABC transporter superfamily. CcmA exporter (TC 3.A.1.107) family. The complex is composed of two ATP-binding proteins (CcmA) and two transmembrane proteins (CcmB).

The protein localises to the cell inner membrane. The catalysed reaction is heme b(in) + ATP + H2O = heme b(out) + ADP + phosphate + H(+). Its function is as follows. Part of the ABC transporter complex CcmAB involved in the biogenesis of c-type cytochromes; once thought to export heme, this seems not to be the case, but its exact role is uncertain. Responsible for energy coupling to the transport system. The polypeptide is Cytochrome c biogenesis ATP-binding export protein CcmA (Alcanivorax borkumensis (strain ATCC 700651 / DSM 11573 / NCIMB 13689 / SK2)).